The sequence spans 439 residues: Ribosomal protein uS12 methylthiotransferase RimO (439 aa).

Residues 4–114 (PKVGFVSLGC…VVRAVHGVAP (111 aa)) enclose the MTTase N-terminal domain. [4Fe-4S] cluster is bound by residues cysteine 13, cysteine 49, cysteine 78, cysteine 147, cysteine 151, and cysteine 154. Positions 133–370 (LTPRHYAYLK…MEHQQAISTA (238 aa)) constitute a Radical SAM core domain. The TRAM domain maps to 373–439 (STRVGREIDV…EYDLWGERIA (67 aa)).

It belongs to the methylthiotransferase family. RimO subfamily. [4Fe-4S] cluster is required as a cofactor.

The protein localises to the cytoplasm. It carries out the reaction L-aspartate(89)-[ribosomal protein uS12]-hydrogen + (sulfur carrier)-SH + AH2 + 2 S-adenosyl-L-methionine = 3-methylsulfanyl-L-aspartate(89)-[ribosomal protein uS12]-hydrogen + (sulfur carrier)-H + 5'-deoxyadenosine + L-methionine + A + S-adenosyl-L-homocysteine + 2 H(+). In terms of biological role, catalyzes the methylthiolation of an aspartic acid residue of ribosomal protein uS12. This Bordetella parapertussis (strain 12822 / ATCC BAA-587 / NCTC 13253) protein is Ribosomal protein uS12 methylthiotransferase RimO.